Reading from the N-terminus, the 896-residue chain is Translation initiation factor IF-2 (896 aa).

Residues 93–219 (VKRDPQEAER…RMAEENEKNW (127 aa)) are compositionally biased toward basic and acidic residues. The interval 93-307 (VKRDPQEAER…GSALQQGFQK (215 aa)) is disordered. The segment covering 256–271 (GRSRSSKAARPAKKGN) has biased composition (basic residues). The segment covering 272 to 285 (KHAESKADREEARA) has biased composition (basic and acidic residues). The 170-residue stretch at 395-564 (PRAPVVTIMG…LLQAEVLELK (170 aa)) folds into the tr-type G domain. The G1 stretch occupies residues 404–411 (GHVDHGKT). A GTP-binding site is contributed by 404 to 411 (GHVDHGKT). The interval 429 to 433 (GITQH) is G2. The interval 450–453 (DTPG) is G3. GTP-binding positions include 450-454 (DTPGH) and 504-507 (NKID). The segment at 504-507 (NKID) is G4. Residues 540 to 542 (SAK) form a G5 region.

The protein belongs to the TRAFAC class translation factor GTPase superfamily. Classic translation factor GTPase family. IF-2 subfamily.

It is found in the cytoplasm. One of the essential components for the initiation of protein synthesis. Protects formylmethionyl-tRNA from spontaneous hydrolysis and promotes its binding to the 30S ribosomal subunits. Also involved in the hydrolysis of GTP during the formation of the 70S ribosomal complex. The sequence is that of Translation initiation factor IF-2 from Klebsiella pneumoniae (strain 342).